The sequence spans 873 residues: DNA mismatch repair protein PMS1 (873 aa).

Positions 1 to 357 are DNA- and ATP-binding; it reads MTQIHQINDI…FKTTLSDYYN (357 aa). Residues 379–402 are compositionally biased toward basic and acidic residues; that stretch reads LKTEVFDDRSTTHESDNENYHTAR. The tract at residues 379-423 is disordered; that stretch reads LKTEVFDDRSTTHESDNENYHTARSESNQSNHAHFNSTTGVIDKS. S393 is subject to Phosphoserine. Over residues 403–423 the composition is skewed to polar residues; the sequence is SESNQSNHAHFNSTTGVIDKS. S566 carries the post-translational modification Phosphoserine. Residues 661–873 form an interaction with MLH1 region; sequence YLTLTVSKND…WSSFSKDYEI (213 aa).

It belongs to the DNA mismatch repair MutL/HexB family. In terms of assembly, heterodimer of MLH1 and PMS1, called MutLalpha, which is the major MMR MutL activity correcting base-base mismatches as well as IDLs. The heterodimer binds double strand DNA independently of a mismatch with positive cooperativity and has more than one DNA binding site. Forms a ternary complex with either the MSH2-MSH6 (MutSalpha) or the MSH2-MSH3 heterodimer (MutSbeta), which recognize and bind to mismatch DNA. Ternary complex formation is promoted by ATP binding.

The protein resides in the nucleus. Functionally, required for DNA mismatch repair (MMR), correcting base-base mismatches and insertion-deletion loops (IDLs) resulting from DNA replication, DNA damage or from recombination events between non-identical sequences during meiosis. Component of the MutLalpha heterodimer that forms a ternary complex with the MutS heterodimers, which initially recognize the DNA mismatches. This complex is thought to be responsible for directing the downstream MMR events, including strand discrimination, excision, and resynthesis. Plays a major role in maintaining the genetic stability of simple sequence repeats and in the repair of heteroduplex sites present in meiotic recombination intermediates. The protein is DNA mismatch repair protein PMS1 (PMS1) of Saccharomyces cerevisiae (strain ATCC 204508 / S288c) (Baker's yeast).